The chain runs to 549 residues: MKNINPTQTAAWQALQKHFDEMKDVTIADLFAKDGDRFSKFSATFGDQMLVDYSKNRITEETLAKLQDLAKECDLAGAIKSMFSGEKINRTENRAVLHVALRNRSNTPILVDGKDVMPEVNAVLEKMKTFSEAIISGEWKGYTGKAITDVVNIGIGGSDLGPYMVTEALRPYKNHLNMHFVSNVDGTHIAEVLKKVNPETTLFLVASKTFTTQETMTNAHSARDWFLKAAGDEKHVAKHFAALSTNAKAVGEFGIDTANMFEFWDWVGGRYSLWSAIGLSIVLSIGFDNFVELLSGAHAMDKHFSTTPAEKNLPVLLALIGIWYNNFFGAETEAILPYDQYMHRFAAYFQQGNMESNGKYVDRNGNVVDYQTGPIIWGEPGTNGQHAFYQLIHQGTKMVPCDFIAPAITHNPLSDHHQKLLSNFFAQTEALAFGKSREVVEQEYRDQGKDPATLDYVVPFKVFEGNRPTNSILLREITPFSLGALIALYEHKIFTQGVILNIFTFDQWGVELGKQLANRILPELKDGKEISSHDSSTNGLINRYKAWRG.

Lys-80, Lys-228, and Lys-234 each carry N6-acetyllysine. The active-site Proton donor is the Glu-355. Active-site residues include His-386 and Lys-514.

This sequence belongs to the GPI family.

The protein resides in the cytoplasm. The catalysed reaction is alpha-D-glucose 6-phosphate = beta-D-fructose 6-phosphate. It participates in carbohydrate biosynthesis; gluconeogenesis. The protein operates within carbohydrate degradation; glycolysis; D-glyceraldehyde 3-phosphate and glycerone phosphate from D-glucose: step 2/4. Catalyzes the reversible isomerization of glucose-6-phosphate to fructose-6-phosphate. The chain is Glucose-6-phosphate isomerase from Escherichia coli (strain SE11).